Here is a 92-residue protein sequence, read N- to C-terminus: Evasin P942 (92 aa).

The first 26 residues, 1–26 (MEVKTFAFLQIAVLIALGLHLAPAGS), serve as a signal peptide directing secretion. 3 disulfides stabilise this stretch: C44–C63, C48–C65, and C59–C76. A glycan (N-linked (GlcNAc...) asparagine) is linked at N47. N70 carries N-linked (GlcNAc...) asparagine glycosylation.

The protein resides in the secreted. Its function is as follows. Salivary chemokine-binding protein which binds to host chemokines CXCL1, CXCL2, CXCL3, CXCL4, CXCL5, CXCL6, CXCL10, CXCL11 and CXCL13. This is Evasin P942 from Ixodes ricinus (Common tick).